The sequence spans 457 residues: Cysteine--tRNA ligase (457 aa).

Cysteine 28 lines the Zn(2+) pocket. The short motif at 30–40 (PTVYDTAHIGN) is the 'HIGH' region element. Zn(2+)-binding residues include cysteine 212, histidine 237, and glutamate 241. A 'KMSKS' region motif is present at residues 270-274 (KMSKS). An ATP-binding site is contributed by lysine 273.

This sequence belongs to the class-I aminoacyl-tRNA synthetase family. In terms of assembly, monomer. The cofactor is Zn(2+).

It is found in the cytoplasm. The catalysed reaction is tRNA(Cys) + L-cysteine + ATP = L-cysteinyl-tRNA(Cys) + AMP + diphosphate. This is Cysteine--tRNA ligase from Wolbachia pipientis wMel.